A 457-amino-acid chain; its full sequence is MGKEKTHVNVVVIGHVDSGKSTTTGHLIYKCGGIDKRTIEKFEKEAAELGKGSFKYAWVLDKLKAERERGITIDIALWKFETPKYNVTVIDAPGHRDFIKNMITGTSQADCAILIIAGGTGEFEAGISKDGQTREHALLAFTLGVRQLIVAINKMDTTKWSQDRYNEIVKEVSGFIKKIGFNPKSVPFVPISGWHGDNMLDESTNMPWFKGWNKETKAGSKTGKTLLEAIDAIEPPVRPSDKPLRLPLQDVYKIGGIGTVPVGRVETGTIKAGMVVNFAPAAVTTEVKSVEMHHETLTEGLPGDNVGFNVKNVSVKDIRRGNVCSDSKNDPAKESASFTAQVIILNHPGQISAGYAPVLDCHTAHIACKFSELIEKIDRRSEKMEDSPKFVKSGDSAIVKMVPSKPMCVEAYTDYPPLGRFAVRDMRQTVAVGVIKAVEKVDKAGKVTKAAAKASKK.

Glycine 2 is modified (n,N,N-trimethylglycine). The residue at position 3 (lysine 3) is an N6,N6-dimethyllysine; alternate. An N6-methyllysine; alternate modification is found at lysine 3. In terms of domain architecture, tr-type G spans 5 to 240 (KTHVNVVVIG…DAIEPPVRPS (236 aa)). The segment at 14–21 (GHVDSGKS) is G1. Position 14–21 (14–21 (GHVDSGKS)) interacts with GTP. The residue at position 30 (lysine 30) is an N6-methyllysine. The tract at residues 70 to 74 (GITID) is G2. Position 79 is an N6,N6,N6-trimethyllysine (lysine 79). Positions 91–94 (DAPG) are G3. Residues 91 to 95 (DAPGH) and 153 to 156 (NKMD) each bind GTP. The G4 stretch occupies residues 153-156 (NKMD). The interval 192–194 (SGW) is G5. Lysine 316 carries the N6,N6-dimethyllysine; alternate modification. Residue lysine 316 is modified to N6-methyllysine; alternate. At lysine 389 the chain carries N6-methyllysine.

The protein belongs to the TRAFAC class translation factor GTPase superfamily. Classic translation factor GTPase family. EF-Tu/EF-1A subfamily.

The protein resides in the cytoplasm. Functionally, this protein promotes the GTP-dependent binding of aminoacyl-tRNA to the A-site of ribosomes during protein biosynthesis. The chain is Elongation factor 1-alpha (TEF-3) from Mucor circinelloides f. lusitanicus (Mucor racemosus var. lusitanicus).